The sequence spans 249 residues: Triosephosphate isomerase (249 aa).

8-10 is a substrate binding site; it reads NWK. The active-site Electrophile is His95. Glu166 functions as the Proton acceptor in the catalytic mechanism. Residues Gly172, Ser211, and 232–233 each bind substrate; that span reads GG.

This sequence belongs to the triosephosphate isomerase family. As to quaternary structure, homodimer.

The protein resides in the cytoplasm. It catalyses the reaction D-glyceraldehyde 3-phosphate = dihydroxyacetone phosphate. Its pathway is carbohydrate biosynthesis; gluconeogenesis. It participates in carbohydrate degradation; glycolysis; D-glyceraldehyde 3-phosphate from glycerone phosphate: step 1/1. Its function is as follows. Involved in the gluconeogenesis. Catalyzes stereospecifically the conversion of dihydroxyacetone phosphate (DHAP) to D-glyceraldehyde-3-phosphate (G3P). The protein is Triosephosphate isomerase of Granulibacter bethesdensis (strain ATCC BAA-1260 / CGDNIH1).